A 255-amino-acid chain; its full sequence is 5'-nucleotidase SurE (255 aa).

A divalent metal cation contacts are provided by Asp13, Asp14, Ser44, and Asn100.

This sequence belongs to the SurE nucleotidase family. A divalent metal cation is required as a cofactor.

Its subcellular location is the cytoplasm. The catalysed reaction is a ribonucleoside 5'-phosphate + H2O = a ribonucleoside + phosphate. Nucleotidase that shows phosphatase activity on nucleoside 5'-monophosphates. The sequence is that of 5'-nucleotidase SurE from Bacteroides fragilis (strain ATCC 25285 / DSM 2151 / CCUG 4856 / JCM 11019 / LMG 10263 / NCTC 9343 / Onslow / VPI 2553 / EN-2).